Consider the following 1173-residue polypeptide: WASH complex subunit 4 (1173 aa).

A2 carries the N-acetylalanine modification. S7 carries the phosphoserine modification. Residues 705 to 1173 are sufficient for interaction with WASHC5; the sequence is KDLALFFSLN…STVSADPVVK (469 aa). The stretch at 1135–1161 forms a coiled coil; sequence RADKTAAEENQEKKEKEEETKTSNGDL. The span at 1142 to 1155 shows a compositional bias: basic and acidic residues; sequence EENQEKKEKEEETK. The interval 1142 to 1173 is disordered; it reads EENQEKKEKEEETKTSNGDLSDSTVSADPVVK. A Phosphothreonine modification is found at T1154. The span at 1157–1167 shows a compositional bias: polar residues; it reads SNGDLSDSTVS.

Belongs to the SWIP family. In terms of assembly, component of the WASH core complex also described as WASH regulatory complex (SHRC) composed of WASH (WASHC1, WASH2P or WASH3P), WASHC2 (WASHC2A or WASHC2C), WASHC3, WASHC4 and WASHC5. The WASH core complex associates via WASHC2 with the F-actin-capping protein dimer (formed by CAPZA1, CAPZA2 or CAPZA3 and CAPZB) in a transient or substoichiometric manner which was initially described as WASH complex.

The protein localises to the early endosome. Its function is as follows. Acts as a component of the WASH core complex that functions as a nucleation-promoting factor (NPF) at the surface of endosomes, where it recruits and activates the Arp2/3 complex to induce actin polymerization, playing a key role in the fission of tubules that serve as transport intermediates during endosome sorting. The chain is WASH complex subunit 4 from Homo sapiens (Human).